The chain runs to 267 residues: Interleukin-1 alpha (267 aa).

A propeptide spanning residues 1 to 112 is cleaved from the precursor; that stretch reads MAKVPDLFED…DPEEGIIKPR (112 aa). N-linked (GlcNAc...) asparagine glycosylation is present at asparagine 64. N6-acetyllysine is present on lysine 82. The nuclear localization signal (NLS) stretch occupies residues 82–86; the sequence is KKRRL. The residue at position 87 (serine 87) is a Phosphoserine. 2 N-linked (GlcNAc...) asparagine glycosylation sites follow: asparagine 100 and asparagine 141.

This sequence belongs to the IL-1 family. As to quaternary structure, monomer. Interacts with TMED10; the interaction mediates the translocation from the cytoplasm into the ERGIC (endoplasmic reticulum-Golgi intermediate compartment) and thereby secretion. Interacts with IL1R1. Interacts with S100A13; this interaction is the first step in the export of IL1A, followed by direct translocation of this complex across the plasma membrane. In terms of processing, acetylated within its nuclear localization sequence, which impacts subcellular localization. Proteolytic processed by CAPN1 in a calcium-dependent manner. Cleavage from 31 kDa precursor to 18 kDa biologically active molecules. Post-translationally, phosphorylated. Phosphorylation greatly enhances susceptibility to digestion and promotes the conversion of pre-IL1A alpha to the biologically active IL1A.

It localises to the nucleus. The protein localises to the cytoplasm. The protein resides in the secreted. Its function is as follows. Cytokine constitutively present intracellularly in nearly all resting non-hematopoietic cells that plays an important role in inflammation and bridges the innate and adaptive immune systems. After binding to its receptor IL1R1 together with its accessory protein IL1RAP, forms the high affinity interleukin-1 receptor complex. Signaling involves the recruitment of adapter molecules such as MYD88, IRAK1 or IRAK4. In turn, mediates the activation of NF-kappa-B and the three MAPK pathways p38, p42/p44 and JNK pathways. Within the cell, acts as an alarmin and cell death results in its liberation in the extracellular space after disruption of the cell membrane to induce inflammation and alert the host to injury or damage. In addition to its role as a danger signal, which occurs when the cytokine is passively released by cell necrosis, directly senses DNA damage and acts as signal for genotoxic stress without loss of cell integrity. The sequence is that of Interleukin-1 alpha (IL1A) from Oryctolagus cuniculus (Rabbit).